Reading from the N-terminus, the 276-residue chain is NAD-capped RNA hydrolase NudC (276 aa).

Substrate is bound at residue arginine 82. Residues cysteine 112 and cysteine 115 each contribute to the Zn(2+) site. A substrate-binding site is contributed by glutamate 125. Residues cysteine 130 and cysteine 133 each coordinate Zn(2+). Tyrosine 138 contacts substrate. The Nudix hydrolase domain occupies 139–262; sequence PRISPSMIVL…SIARYLIDLY (124 aa). The a divalent metal cation site is built by alanine 172, glutamate 188, and glutamate 192. The short motif at 173–194 is the Nudix box element; that stretch reads GFAEPGESAEDCLVREVREEVA. 206 to 213 serves as a coordination point for substrate; sequence QCWPFPHS. Glutamate 233 is an a divalent metal cation binding site. Position 255 (alanine 255) interacts with substrate.

The protein belongs to the Nudix hydrolase family. NudC subfamily. In terms of assembly, homodimer. Mg(2+) serves as cofactor. The cofactor is Mn(2+). Requires Zn(2+) as cofactor.

It carries out the reaction a 5'-end NAD(+)-phospho-ribonucleoside in mRNA + H2O = a 5'-end phospho-adenosine-phospho-ribonucleoside in mRNA + beta-nicotinamide D-ribonucleotide + 2 H(+). The enzyme catalyses NAD(+) + H2O = beta-nicotinamide D-ribonucleotide + AMP + 2 H(+). The catalysed reaction is NADH + H2O = reduced beta-nicotinamide D-ribonucleotide + AMP + 2 H(+). Its function is as follows. mRNA decapping enzyme that specifically removes the nicotinamide adenine dinucleotide (NAD) cap from a subset of mRNAs by hydrolyzing the diphosphate linkage to produce nicotinamide mononucleotide (NMN) and 5' monophosphate mRNA. The NAD-cap is present at the 5'-end of some mRNAs and stabilizes RNA against 5'-processing. Has preference for mRNAs with a 5'-end purine. Catalyzes the hydrolysis of a broad range of dinucleotide pyrophosphates. This is NAD-capped RNA hydrolase NudC from Pseudomonas putida (strain GB-1).